A 148-amino-acid chain; its full sequence is Large ribosomal subunit protein uL11 (148 aa).

It belongs to the universal ribosomal protein uL11 family. As to quaternary structure, part of the ribosomal stalk of the 50S ribosomal subunit. Interacts with L10 and the large rRNA to form the base of the stalk. L10 forms an elongated spine to which L12 dimers bind in a sequential fashion forming a multimeric L10(L12)X complex. One or more lysine residues are methylated.

Its function is as follows. Forms part of the ribosomal stalk which helps the ribosome interact with GTP-bound translation factors. The protein is Large ribosomal subunit protein uL11 of Myxococcus xanthus (strain DK1622).